The primary structure comprises 150 residues: Large ribosomal subunit protein bL9 (150 aa).

It belongs to the bacterial ribosomal protein bL9 family.

Binds to the 23S rRNA. The protein is Large ribosomal subunit protein bL9 of Shewanella baltica (strain OS223).